A 784-amino-acid chain; its full sequence is Toll-like receptor 2 (784 aa).

A signal peptide spans 1-20 (MPHTLWMVWVLGVIISLSKE). The Extracellular portion of the chain corresponds to 21–587 (ESSNQASLSC…VRLSVSECHR (567 aa)). Cys-30 and Cys-36 are joined by a disulfide. 19 LRR repeats span residues 54–77 (VKSL…RCVN), 78–101 (LQAL…SLGS), 102–125 (LEHL…PLSS), 126–150 (LTFL…HLTK), 151–175 (LQIL…GLTF), 176–199 (LEEL…SIQN), 200–223 (VSHL…VTSS), 224–250 (VECL…TNSL), 251–278 (IKKF…QISG), 279–308 (LLEL…DPGK), 309–337 (VETL…LTER), 338–361 (VKRI…HLKS), 362–388 (LEYL…AWPS), 389–414 (LQTL…TLKN), 415–437 (LTNV…WPEK), 438–457 (MKYL…CIPK), 458–478 (TLEI…NLPQ), 479–500 (LKEL…LLPM), and 501–524 (LLVL…SFHT). The N-linked (GlcNAc...) asparagine glycan is linked to Asn-114. An N-linked (GlcNAc...) asparagine glycan is attached at Asn-199. Cys-353 and Cys-382 are disulfide-bonded. The N-linked (GlcNAc...) asparagine glycan is linked to Asn-414. Cys-432 and Cys-454 are oxidised to a cystine. Asn-442 carries N-linked (GlcNAc...) asparagine glycosylation. The region spanning 525–579 (LKTLEAGGNNFICSCEFLSFTQEQQALAKVLIDWPANYLCDSPSHVRGQQVQDVR) is the LRRCT domain. A helical transmembrane segment spans residues 588 to 608 (TALVSGMCCALFLLILLTGVL). The Cytoplasmic portion of the chain corresponds to 609-784 (CHRFHGLWYM…WVNLRAAIKS (176 aa)). The TIR domain occupies 639–782 (ICYDAFVSYS…GFWVNLRAAI (144 aa)). Lys-754 participates in a covalent cross-link: Glycyl lysine isopeptide (Lys-Gly) (interchain with G-Cter in ubiquitin). The ATG16L1-binding motif motif lies at 761–778 (YLEWPMDEAQREGFWVNL).

This sequence belongs to the Toll-like receptor family. As to quaternary structure, interacts with LY96, TLR1 and TLR6 (via extracellular domain). TLR2 seems to exist in heterodimers with either TLR1 or TLR6 before stimulation by the ligand. The heterodimers form bigger oligomers in response to their corresponding ligands as well as further heterotypic associations with other receptors such as CD14 and/or CD36. Binds MYD88 (via TIR domain). Interacts with TICAM1. Interacts with CNPY3. Interacts with ATG16L1. Interacts with PPP1R11. Interacts with TICAM2. Interacts with TIRAP. Post-translationally, ubiquitinated at Lys-754 by PPP1R11, leading to its degradation. Deubiquitinated by USP2. Glycosylation of Asn-442 is critical for secretion of the N-terminal ectodomain of TLR2.

The protein resides in the membrane. The protein localises to the cytoplasmic vesicle. It is found in the phagosome membrane. Its subcellular location is the membrane raft. In terms of biological role, cooperates with LY96 to mediate the innate immune response to bacterial lipoproteins and other microbial cell wall components. Cooperates with TLR1 or TLR6 to mediate the innate immune response to bacterial lipoproteins or lipopeptides. Acts via MYD88 and TRAF6, leading to NF-kappa-B activation, cytokine secretion and the inflammatory response. May also promote apoptosis in response to lipoproteins. Forms activation clusters composed of several receptors depending on the ligand, these clusters trigger signaling from the cell surface and subsequently are targeted to the Golgi in a lipid-raft dependent pathway. Forms the cluster TLR2:TLR6:CD14:CD36 in response to diacylated lipopeptides and TLR2:TLR1:CD14 in response to triacylated lipopeptides. The sequence is that of Toll-like receptor 2 (TLR2) from Pan troglodytes (Chimpanzee).